The primary structure comprises 316 residues: MNLDYLDFEQPIAELQAKIDELRRVGTSQEINLTEEVNKLEEKNAQLTRQIFSNLTAQQIVQLARHPLRPYTLDYIQRIFTDFNELHGDRHYSQASAIIGGLARLNGEPVMVIGHQKGRTTQEKIYRNFGMARPEGFRKALRLMKLAERFSIPVITLIDTPGAYPGIGAEERNQSEAIARNLFEMAQLKIPIICTIIGEGCSGGALAIGVGDRTLMLQYAYYSVISPEGCASILWKSAEKAGEAAEALGLTANRLHELGLIDEIIKEPLGGAHRDTDAMAEKLKKHLQANLTNLQAKSANDLLEERYRRWLSYGKD.

In terms of domain architecture, CoA carboxyltransferase C-terminal spans 39–293; that stretch reads KLEEKNAQLT…KKHLQANLTN (255 aa).

Belongs to the AccA family. In terms of assembly, acetyl-CoA carboxylase is a heterohexamer composed of biotin carboxyl carrier protein (AccB), biotin carboxylase (AccC) and two subunits each of ACCase subunit alpha (AccA) and ACCase subunit beta (AccD).

It is found in the cytoplasm. It carries out the reaction N(6)-carboxybiotinyl-L-lysyl-[protein] + acetyl-CoA = N(6)-biotinyl-L-lysyl-[protein] + malonyl-CoA. Its pathway is lipid metabolism; malonyl-CoA biosynthesis; malonyl-CoA from acetyl-CoA: step 1/1. Functionally, component of the acetyl coenzyme A carboxylase (ACC) complex. First, biotin carboxylase catalyzes the carboxylation of biotin on its carrier protein (BCCP) and then the CO(2) group is transferred by the carboxyltransferase to acetyl-CoA to form malonyl-CoA. In Coxiella burnetii (strain CbuK_Q154) (Coxiella burnetii (strain Q154)), this protein is Acetyl-coenzyme A carboxylase carboxyl transferase subunit alpha.